Consider the following 253-residue polypeptide: Imidazole glycerol phosphate synthase subunit HisF (253 aa).

Catalysis depends on residues Asp11 and Asp130.

The protein belongs to the HisA/HisF family. In terms of assembly, heterodimer of HisH and HisF.

It is found in the cytoplasm. It carries out the reaction 5-[(5-phospho-1-deoxy-D-ribulos-1-ylimino)methylamino]-1-(5-phospho-beta-D-ribosyl)imidazole-4-carboxamide + L-glutamine = D-erythro-1-(imidazol-4-yl)glycerol 3-phosphate + 5-amino-1-(5-phospho-beta-D-ribosyl)imidazole-4-carboxamide + L-glutamate + H(+). It participates in amino-acid biosynthesis; L-histidine biosynthesis; L-histidine from 5-phospho-alpha-D-ribose 1-diphosphate: step 5/9. Its function is as follows. IGPS catalyzes the conversion of PRFAR and glutamine to IGP, AICAR and glutamate. The HisF subunit catalyzes the cyclization activity that produces IGP and AICAR from PRFAR using the ammonia provided by the HisH subunit. The protein is Imidazole glycerol phosphate synthase subunit HisF of Ruegeria pomeroyi (strain ATCC 700808 / DSM 15171 / DSS-3) (Silicibacter pomeroyi).